Here is a 414-residue protein sequence, read N- to C-terminus: Esterase FrsA (414 aa).

Belongs to the FrsA family.

It carries out the reaction a carboxylic ester + H2O = an alcohol + a carboxylate + H(+). Functionally, catalyzes the hydrolysis of esters. In Escherichia coli O127:H6 (strain E2348/69 / EPEC), this protein is Esterase FrsA.